The chain runs to 413 residues: Histidine--tRNA ligase (413 aa).

Belongs to the class-II aminoacyl-tRNA synthetase family. Homodimer.

Its subcellular location is the cytoplasm. The catalysed reaction is tRNA(His) + L-histidine + ATP = L-histidyl-tRNA(His) + AMP + diphosphate + H(+). In Geobacter sulfurreducens (strain ATCC 51573 / DSM 12127 / PCA), this protein is Histidine--tRNA ligase.